Reading from the N-terminus, the 258-residue chain is Hemin import ATP-binding protein HmuV (258 aa).

One can recognise an ABC transporter domain in the interval 2-242 (LTAEKLCVER…SKIEELYDFP (241 aa)). 34–41 (GANGAGKS) contributes to the ATP binding site.

This sequence belongs to the ABC transporter superfamily. Heme (hemin) importer (TC 3.A.1.14.5) family. The complex is composed of two ATP-binding proteins (HmuV), two transmembrane proteins (HmuU) and a solute-binding protein (HmuT).

Its subcellular location is the cell inner membrane. In terms of biological role, part of the ABC transporter complex HmuTUV involved in hemin import. Responsible for energy coupling to the transport system. The polypeptide is Hemin import ATP-binding protein HmuV (Hydrogenovibrio crunogenus (strain DSM 25203 / XCL-2) (Thiomicrospira crunogena)).